Here is a 607-residue protein sequence, read N- to C-terminus: NADH-ubiquinone oxidoreductase chain 5 (607 aa).

A run of 16 helical transmembrane segments spans residues 3-23, 35-55, 84-104, 117-137, 140-160, 171-191, 210-230, 241-261, 272-292, 301-320, 324-344, 365-385, 405-427, 457-477, 482-502, and 586-606; these read IFTTSILLIFILLLSPILISM, YTTTSIKFSFIISLLPLLMFF, FFSILFTSVALFVTWSIMQFS, FIKYLTLFLITMLILTSANNM, LFIGWEGVGIMSFLLIGWWYG, AILYNRIGDIGFILAMVWFSL, LIPLMGLLIAATGKSAQFGLH, TPVSALLHSSTMVVAGIFLLV, FILTTMLCLGALTTLFTAICA, IIAFSTSSQLGLMMVTLGMN, LAFLHICTHAFFKAMLFMCSG, IMPFTSSCLVIGSLALTGMPF, NAWALLITLIATSMTAMYSMRII, LAFGSIFAGFVISYNIPPTSI, MPWFLKTTALIISVLGFLIAL, and LYFMSFLINIILIIILYSINL.

It belongs to the complex I subunit 5 family. In terms of assembly, core subunit of respiratory chain NADH dehydrogenase (Complex I) which is composed of 45 different subunits.

The protein localises to the mitochondrion inner membrane. The catalysed reaction is a ubiquinone + NADH + 5 H(+)(in) = a ubiquinol + NAD(+) + 4 H(+)(out). In terms of biological role, core subunit of the mitochondrial membrane respiratory chain NADH dehydrogenase (Complex I) which catalyzes electron transfer from NADH through the respiratory chain, using ubiquinone as an electron acceptor. Essential for the catalytic activity and assembly of complex I. The protein is NADH-ubiquinone oxidoreductase chain 5 (Mtnd5) of Mus musculus (Mouse).